Reading from the N-terminus, the 240-residue chain is Coat protein (240 aa).

Residues 1–10 (MATPSTQTTD) show a composition bias toward polar residues. The interval 1–27 (MATPSTQTTDPKPANADLSDPNRAPSL) is disordered.

This sequence belongs to the potexvirus capsid protein family.

It is found in the virion. Required for genome encapsidation. Forms ribonucleoprotein complexes along with TGB1 helicase and viral RNA. The protein is Coat protein of Narcissus pseudonarcissus (Daffodil).